Reading from the N-terminus, the 589-residue chain is Isocitrate dehydrogenase kinase/phosphatase (589 aa).

Residues 322–328 and lysine 343 contribute to the ATP site; that span reads APGIRGL. The active site involves aspartate 378.

This sequence belongs to the AceK family.

Its subcellular location is the cytoplasm. It carries out the reaction L-seryl-[isocitrate dehydrogenase] + ATP = O-phospho-L-seryl-[isocitrate dehydrogenase] + ADP + H(+). Functionally, bifunctional enzyme which can phosphorylate or dephosphorylate isocitrate dehydrogenase (IDH) on a specific serine residue. This is a regulatory mechanism which enables bacteria to bypass the Krebs cycle via the glyoxylate shunt in response to the source of carbon. When bacteria are grown on glucose, IDH is fully active and unphosphorylated, but when grown on acetate or ethanol, the activity of IDH declines drastically concomitant with its phosphorylation. The protein is Isocitrate dehydrogenase kinase/phosphatase of Azoarcus sp. (strain BH72).